The sequence spans 115 residues: NADH-ubiquinone oxidoreductase chain 3 (115 aa).

3 consecutive transmembrane segments (helical) span residues 4 to 24, 55 to 75, and 84 to 104; these read MLAM…AFWL, FFLV…LLPL, and MITT…GLSY.

This sequence belongs to the complex I subunit 3 family. In terms of assembly, core subunit of respiratory chain NADH dehydrogenase (Complex I) which is composed of 45 different subunits. Interacts with TMEM186. Interacts with TMEM242.

It localises to the mitochondrion inner membrane. It carries out the reaction a ubiquinone + NADH + 5 H(+)(in) = a ubiquinol + NAD(+) + 4 H(+)(out). Core subunit of the mitochondrial membrane respiratory chain NADH dehydrogenase (Complex I) which catalyzes electron transfer from NADH through the respiratory chain, using ubiquinone as an electron acceptor. Essential for the catalytic activity of complex I. The protein is NADH-ubiquinone oxidoreductase chain 3 of Reithrodon auritus (Bunny rat).